We begin with the raw amino-acid sequence, 141 residues long: Large ribosomal subunit protein uL16 (141 aa).

A compositionally biased stretch (basic residues) spans 1 to 17 (MLQPKRTKYRKVQKGRM). The disordered stretch occupies residues 1 to 29 (MLQPKRTKYRKVQKGRMKGNSQRGHELSN).

The protein belongs to the universal ribosomal protein uL16 family. In terms of assembly, part of the 50S ribosomal subunit.

In terms of biological role, binds 23S rRNA and is also seen to make contacts with the A and possibly P site tRNAs. The polypeptide is Large ribosomal subunit protein uL16 (Flavobacterium johnsoniae (strain ATCC 17061 / DSM 2064 / JCM 8514 / BCRC 14874 / CCUG 350202 / NBRC 14942 / NCIMB 11054 / UW101) (Cytophaga johnsonae)).